The sequence spans 91 residues: DNA-binding protein HRL53 (91 aa).

The segment at 57–91 (ATKGRNPSTGAEVDIPARNVPKFTPGKGLKDAVNG) is disordered.

The protein belongs to the bacterial histone-like protein family.

In terms of biological role, histone-like DNA-binding protein which is capable of wrapping DNA to stabilize it, and thus to prevent its denaturation under extreme environmental conditions. Binds to nod promoters and induces DNA binding. This Rhizobium leguminosarum protein is DNA-binding protein HRL53.